The chain runs to 650 residues: Acetyl-coenzyme A synthetase (650 aa).

CoA contacts are provided by residues 191 to 194 (RGGR), Thr-311, and Asn-335. ATP contacts are provided by residues 387-389 (GEP), 411-416 (DTWWQT), Asp-500, and Arg-515. Ser-523 is a binding site for CoA. Arg-526 contacts ATP. Positions 537, 539, and 542 each coordinate Mg(2+). Arg-584 contributes to the CoA binding site. Lys-609 carries the post-translational modification N6-acetyllysine.

It belongs to the ATP-dependent AMP-binding enzyme family. It depends on Mg(2+) as a cofactor. In terms of processing, acetylated. Deacetylation by the SIR2-homolog deacetylase activates the enzyme.

The catalysed reaction is acetate + ATP + CoA = acetyl-CoA + AMP + diphosphate. Functionally, catalyzes the conversion of acetate into acetyl-CoA (AcCoA), an essential intermediate at the junction of anabolic and catabolic pathways. AcsA undergoes a two-step reaction. In the first half reaction, AcsA combines acetate with ATP to form acetyl-adenylate (AcAMP) intermediate. In the second half reaction, it can then transfer the acetyl group from AcAMP to the sulfhydryl group of CoA, forming the product AcCoA. The polypeptide is Acetyl-coenzyme A synthetase (Shewanella sp. (strain MR-4)).